Consider the following 74-residue polypeptide: Control protein C.MunI (74 aa).

The HTH cro/C1-type domain maps to 12–67; the sequence is LKKLRKEKTDLSQESFAAQIDLDRTYYSSIENGKRNVSLVNLEKISAGLGITLSEL. Positions 23–42 form a DNA-binding region, H-T-H motif; it reads SQESFAAQIDLDRTYYSSIE.

Functionally, probably controls expression of its associated restriction-modification system MunI. This chain is Control protein C.MunI, found in Mycoplasma sp.